The sequence spans 347 residues: 3,4-dihydroxy-2-butanone 4-phosphate synthase (347 aa).

The segment at 1–200 is DHBP synthase; sequence MPLNRVREAI…ISDLIEYRMQ (200 aa). Residues 27–28, D32, 139–143, and E163 each bind D-ribulose 5-phosphate; these read RE and RTGHT. Residue E28 coordinates Mg(2+). H142 contacts Mg(2+). Residues 201 to 347 form a GTP cyclohydrolase II-like region; sequence NEMLILIKER…IVLQGGPIQL (147 aa).

The protein in the N-terminal section; belongs to the DHBP synthase family. In the C-terminal section; belongs to the GTP cyclohydrolase II family. Mg(2+) serves as cofactor. The cofactor is Mn(2+).

It catalyses the reaction D-ribulose 5-phosphate = (2S)-2-hydroxy-3-oxobutyl phosphate + formate + H(+). The protein operates within cofactor biosynthesis; riboflavin biosynthesis; 2-hydroxy-3-oxobutyl phosphate from D-ribulose 5-phosphate: step 1/1. Catalyzes the conversion of D-ribulose 5-phosphate to formate and 3,4-dihydroxy-2-butanone 4-phosphate. The chain is 3,4-dihydroxy-2-butanone 4-phosphate synthase (ribB) from Wolinella succinogenes (strain ATCC 29543 / DSM 1740 / CCUG 13145 / JCM 31913 / LMG 7466 / NCTC 11488 / FDC 602W) (Vibrio succinogenes).